The chain runs to 540 residues: CUB domain-containing protein 2 (540 aa).

An N-terminal signal peptide occupies residues 1-24 (MLAELGACLLLAMVLLDSDPGTQA). At 25-516 (MEGVKCGGVL…GTMVTQDTSD (492 aa)) the chain is on the extracellular side. Cystine bridges form between cysteine 30–cysteine 56, cysteine 83–cysteine 106, cysteine 145–cysteine 171, cysteine 198–cysteine 218, cysteine 257–cysteine 283, and cysteine 314–cysteine 336. CUB domains lie at 30 to 143 (CGGV…YQKD), 145 to 255 (CGGV…YFSG), and 257 to 373 (CQEV…YIGV). An N-linked (GlcNAc...) asparagine glycan is attached at asparagine 40. Asparagine 267 carries N-linked (GlcNAc...) asparagine glycosylation. Residues asparagine 377, asparagine 435, and asparagine 436 are each glycosylated (N-linked (GlcNAc...) asparagine). Residues 517 to 537 (IVFLGLCILAGVLMIIAIVVL) form a helical membrane-spanning segment. The Cytoplasmic segment spans residues 538-540 (MLL).

The protein localises to the membrane. This chain is CUB domain-containing protein 2 (Cdcp2), found in Mus musculus (Mouse).